We begin with the raw amino-acid sequence, 79 residues long: Probable Fe(2+)-trafficking protein (79 aa).

The protein belongs to the Fe(2+)-trafficking protein family. Monomer.

In terms of biological role, could be a mediator in iron transactions between iron acquisition and iron-requiring processes, such as synthesis and/or repair of Fe-S clusters in biosynthetic enzymes. The protein is Probable Fe(2+)-trafficking protein of Blochmanniella floridana.